Consider the following 210-residue polypeptide: Urease accessory protein UreF (210 aa).

Belongs to the UreF family. UreD, UreF and UreG form a complex that acts as a GTP-hydrolysis-dependent molecular chaperone, activating the urease apoprotein by helping to assemble the nickel containing metallocenter of UreC. The UreE protein probably delivers the nickel.

It localises to the cytoplasm. In terms of biological role, required for maturation of urease via the functional incorporation of the urease nickel metallocenter. The chain is Urease accessory protein UreF from Cereibacter sphaeroides (strain ATCC 17029 / ATH 2.4.9) (Rhodobacter sphaeroides).